Here is a 395-residue protein sequence, read N- to C-terminus: MAKEKFDRSKPHVNIGTIGHVDHGKTTLTAAITTVLAKKGYADAQAYDQIDGAPEERERGITISTAHVEYQTDSRHYAHVDCPGHADYVKNMITGAAQMDGAILVVSAADGPMPQTREHILLSRQVGVPYIVVFMNKCDMVDDEELLELVEMEIRDLLTEYEFPGDDIPVIKGSALKALQGEADWEAKIDELMEAVDSYIPTPERDTDKPFMMPVEDVFSITGRGTVATGRVERGQVKVGDEVEVIGIEEESKKVVVTGVEMFRKLLDYAEAGDNIGALLRGVAREDIQRGQVLAKPGSITPHTNFKAETYVLTKEEGGRHTPFFNNYRPQFYFRTTDVTGIVTLPEGTEMVMPGDNIELAVELIAPIAIEDGTKFSIREGGRTVGAGVVSNISK.

The tr-type G domain maps to 10–204; the sequence is KPHVNIGTIG…AVDSYIPTPE (195 aa). The tract at residues 19–26 is G1; sequence GHVDHGKT. Residue 19–26 participates in GTP binding; sequence GHVDHGKT. Thr26 is a Mg(2+) binding site. A G2 region spans residues 60 to 64; sequence GITIS. Residues 81 to 84 form a G3 region; it reads DCPG. Residues 81–85 and 136–139 each bind GTP; these read DCPGH and NKCD. The tract at residues 136 to 139 is G4; sequence NKCD. A G5 region spans residues 174 to 176; it reads SAL.

The protein belongs to the TRAFAC class translation factor GTPase superfamily. Classic translation factor GTPase family. EF-Tu/EF-1A subfamily. In terms of assembly, monomer.

It localises to the cytoplasm. It catalyses the reaction GTP + H2O = GDP + phosphate + H(+). Its function is as follows. GTP hydrolase that promotes the GTP-dependent binding of aminoacyl-tRNA to the A-site of ribosomes during protein biosynthesis. The sequence is that of Elongation factor Tu from Listeria monocytogenes serotype 4b (strain CLIP80459).